Reading from the N-terminus, the 220-residue chain is Fructose-6-phosphate aldolase (220 aa).

Residue Lys85 is the Schiff-base intermediate with substrate of the active site.

Belongs to the transaldolase family. Type 3A subfamily. In terms of assembly, homodecamer.

The protein resides in the cytoplasm. The enzyme catalyses beta-D-fructose 6-phosphate = dihydroxyacetone + D-glyceraldehyde 3-phosphate. Functionally, catalyzes the reversible formation of fructose 6-phosphate from dihydroxyacetone and D-glyceraldehyde 3-phosphate via an aldolization reaction. In Klebsiella pneumoniae subsp. pneumoniae (strain ATCC 700721 / MGH 78578), this protein is Fructose-6-phosphate aldolase.